A 205-amino-acid chain; its full sequence is Protein phosphatase inhibitor 2 family member B (205 aa).

Residues 1 to 44 (MAASTASHRPIKGILKNKTSTTSSMVASAEQPRRSVDEELSKKS) are disordered. A2 is modified (N-acetylalanine). Required for binding PPP1CC stretches follow at residues 12 to 17 (KGILKN) and 43 to 55 (KSQKWDEINILAT). The segment covering 17–26 (NKTSTTSSMV) has biased composition (polar residues). Over residues 31-44 (QPRRSVDEELSKKS) the composition is skewed to basic and acidic residues. The residue at position 44 (S44) is a Phosphoserine. A phosphothreonine mark is found at T89 and T92. The disordered stretch occupies residues 111-142 (EPKYRIQEQESSGEEDSDLSPEEREKKRQFEM). Residues S121, S122, S127, and S130 each carry the phosphoserine modification. Residues 121-130 (SSGEEDSDLS) are compositionally biased toward acidic residues. Residues 131-142 (PEEREKKRQFEM) are compositionally biased toward basic and acidic residues. Positions 147–150 (HYNE) are required for binding PPP1CC catalytic center, displacing metal ions and inhibition of PPP1CC catalytic activity. The interval 163 to 205 (KDLHDDDEDEEMLETADGESMNTEESNQGSTPSDQQQNKLRSS) is disordered. Acidic residues predominate over residues 167 to 179 (DDDEDEEMLETAD). Over residues 182–205 (SMNTEESNQGSTPSDQQQNKLRSS) the composition is skewed to polar residues.

The protein belongs to the protein phosphatase inhibitor 2 family. As to quaternary structure, interacts with PPP1CC. Only detected in spermatozoa, both heads and tails.

Functionally, inhibitor of protein-phosphatase 1. The sequence is that of Protein phosphatase inhibitor 2 family member B from Homo sapiens (Human).